We begin with the raw amino-acid sequence, 469 residues long: Glutamate--tRNA ligase (469 aa).

A 'HIGH' region motif is present at residues 9–19 (PSPTGYLHVGG). Zn(2+) is bound by residues Cys98, Cys100, Cys125, and Asp127. The 'KMSKS' region motif lies at 237-241 (KLSKR). Lys240 contributes to the ATP binding site.

It belongs to the class-I aminoacyl-tRNA synthetase family. Glutamate--tRNA ligase type 1 subfamily. Monomer. Requires Zn(2+) as cofactor.

The protein localises to the cytoplasm. The enzyme catalyses tRNA(Glu) + L-glutamate + ATP = L-glutamyl-tRNA(Glu) + AMP + diphosphate. Catalyzes the attachment of glutamate to tRNA(Glu) in a two-step reaction: glutamate is first activated by ATP to form Glu-AMP and then transferred to the acceptor end of tRNA(Glu). The sequence is that of Glutamate--tRNA ligase from Erwinia tasmaniensis (strain DSM 17950 / CFBP 7177 / CIP 109463 / NCPPB 4357 / Et1/99).